The chain runs to 314 residues: Transmembrane protein 178B (314 aa).

The first 24 residues, 1–24 (MRLLAGAGLCLALAALALLAVALS), serve as a signal peptide directing secretion. The disordered stretch occupies residues 32-83 (DARRHRDRCRKPGGKRNDPGYMYTPGQHLPLRGEPPSSRIRSPRGGEPGGVR). The span at 36–45 (HRDRCRKPGG) shows a compositional bias: basic residues. Transmembrane regions (helical) follow at residues 194-214 (AGFIGMAVSIILFGWMVGVLG), 228-248 (LLFLMGGTCCIISLCTCVAGI), and 274-294 (MFCAWGGLGLTLLSGFLCTLA).

Belongs to the TMEM178 family.

It localises to the membrane. The polypeptide is Transmembrane protein 178B (tmem178b) (Xenopus tropicalis (Western clawed frog)).